The sequence spans 496 residues: RNA-binding motif protein, Y chromosome, family 1 member A1 (496 aa).

In terms of domain architecture, RRM spans 8 to 85; sequence GKLFIGGLNR…KAIKVEQAKK (78 aa). Disordered stretches follow at residues 78–349 and 452–496; these read IKVE…HRDY and KDQR…SSRY. Low complexity-rich tracts occupy residues 97–114 and 149–159; these read PASSRNRSPSGSLRSARG and PVKRGPSSRSG. Residues 175–184 show a composition bias toward polar residues; sequence NSWMGSQGPM. Basic and acidic residues-rich tracts occupy residues 204–214, 242–253, 276–289, 313–326, 335–349, and 484–496; these read RNDRMSTRHDG, DNGHSNRDEHSS, AYRDYGHSRRDESY, GYRDYGHSRRHESY, SSRETRDYAPPHRDY, and GESRSEKGDSSRY.

As to quaternary structure, interacts with splicing factor proteins SFRS3/SRP20, TRA2B/SFRS10, KHDRBS1/SAM68 and KHDRBS3. In terms of tissue distribution, testis-specific.

The protein resides in the nucleus. In terms of biological role, RNA-binding protein involved in pre-mRNA splicing. Required for sperm development. Acts additively with TRA2B to promote exon 7 inclusion of the survival motor neuron SMN. Binds non-specifically to mRNAs. The chain is RNA-binding motif protein, Y chromosome, family 1 member A1 (RBMY1A1) from Homo sapiens (Human).